The chain runs to 177 residues: Adenine phosphoribosyltransferase (177 aa).

The protein belongs to the purine/pyrimidine phosphoribosyltransferase family. As to quaternary structure, homodimer.

Its subcellular location is the cytoplasm. The enzyme catalyses AMP + diphosphate = 5-phospho-alpha-D-ribose 1-diphosphate + adenine. Its pathway is purine metabolism; AMP biosynthesis via salvage pathway; AMP from adenine: step 1/1. Its function is as follows. Catalyzes a salvage reaction resulting in the formation of AMP, that is energically less costly than de novo synthesis. In Leptospira biflexa serovar Patoc (strain Patoc 1 / Ames), this protein is Adenine phosphoribosyltransferase.